Reading from the N-terminus, the 166-residue chain is Large ribosomal subunit protein eL21 (166 aa).

The protein belongs to the eukaryotic ribosomal protein eL21 family. Component of the large ribosomal subunit.

It localises to the cytoplasm. It is found in the cytosol. Its subcellular location is the endoplasmic reticulum. In terms of biological role, component of the large ribosomal subunit. The ribosome is a large ribonucleoprotein complex responsible for the synthesis of proteins in the cell. The protein is Large ribosomal subunit protein eL21 (RPL21) of Entamoeba histolytica (strain ATCC 30459 / HM-1:IMSS / ABRM).